The following is a 185-amino-acid chain: Elongation factor P (185 aa).

The protein belongs to the elongation factor P family.

The protein resides in the cytoplasm. Its pathway is protein biosynthesis; polypeptide chain elongation. Involved in peptide bond synthesis. Stimulates efficient translation and peptide-bond synthesis on native or reconstituted 70S ribosomes in vitro. Probably functions indirectly by altering the affinity of the ribosome for aminoacyl-tRNA, thus increasing their reactivity as acceptors for peptidyl transferase. This chain is Elongation factor P, found in Agathobacter rectalis (strain ATCC 33656 / DSM 3377 / JCM 17463 / KCTC 5835 / VPI 0990) (Eubacterium rectale).